The chain runs to 389 residues: Chalcone synthase 1 (389 aa).

C163 is a catalytic residue.

Belongs to the thiolase-like superfamily. Chalcone/stilbene synthases family.

It carries out the reaction (E)-4-coumaroyl-CoA + 3 malonyl-CoA + 3 H(+) = 2',4,4',6'-tetrahydroxychalcone + 3 CO2 + 4 CoA. The protein operates within secondary metabolite biosynthesis; flavonoid biosynthesis. The primary product of this enzyme is 4,2',4',6'-tetrahydroxychalcone (also termed naringenin-chalcone or chalcone) which can under specific conditions spontaneously isomerize into naringenin. The polypeptide is Chalcone synthase 1 (CHS1) (Citrus sinensis (Sweet orange)).